The sequence spans 534 residues: Lysophosphatidylcholine acyltransferase 1 (534 aa).

Residues 1 to 25 (MRLRGRGPRAAPSSSSGAGDARRLA) are disordered. The Cytoplasmic portion of the chain corresponds to 1 to 57 (MRLRGRGPRAAPSSSSGAGDARRLAPPGRNPFVHELRLSALQKAQVAFMTLTLFPIR). The span at 8–19 (PRAAPSSSSGAG) shows a compositional bias: low complexity. A helical; Signal-anchor for type II membrane protein transmembrane segment spans residues 58-78 (LLFAAFMMLLAWPFALLASLG). At 79 to 534 (PPDKEPEQPL…GRKNSCKKAD (456 aa)) the chain is on the lumenal side. The short motif at 135–140 (HSSYFD) is the HXXXXD motif element. EF-hand domains lie at 379–414 (PVSD…VCRP) and 451–486 (VSEL…YPDY). Ca(2+) is bound by residues Asp392, Ser394, Glu398, and Glu403. A Di-lysine motif motif is present at residues 531 to 534 (KKAD).

This sequence belongs to the 1-acyl-sn-glycerol-3-phosphate acyltransferase family. In terms of tissue distribution, predominantly expressed in lung where it is enriched in alveolar type II cells. Expressed at lower levels in spleen and brain. Also detected in erythroleukemic cells and reticulocytes. Weakly or not expressed in other tissues.

Its subcellular location is the endoplasmic reticulum membrane. The protein localises to the golgi apparatus membrane. The protein resides in the cell membrane. It is found in the lipid droplet. It carries out the reaction a 1-acyl-sn-glycero-3-phosphocholine + an acyl-CoA = a 1,2-diacyl-sn-glycero-3-phosphocholine + CoA. It catalyses the reaction a 1-O-alkyl-sn-glycero-3-phosphocholine + acetyl-CoA = a 1-O-alkyl-2-acetyl-sn-glycero-3-phosphocholine + CoA. The enzyme catalyses a 1-acyl-sn-glycero-3-phosphate + an acyl-CoA = a 1,2-diacyl-sn-glycero-3-phosphate + CoA. The catalysed reaction is a 1-O-(1Z-alkenyl)-sn-glycero-3-phosphocholine + an acyl-CoA = a 1-O-(1Z-alkenyl)-2-acyl-sn-glycero-3-phosphocholine + CoA. It carries out the reaction 1-acyl-sn-glycero-3-phospho-(1'-sn-glycerol) + an acyl-CoA = a 1,2-diacyl-sn-glycero-3-phospho-(1'-sn-glycerol) + CoA. It catalyses the reaction 1-hexadecanoyl-sn-glycero-3-phosphocholine + hexadecanoyl-CoA = 1,2-dihexadecanoyl-sn-glycero-3-phosphocholine + CoA. The enzyme catalyses 1-O-hexadecyl-sn-glycero-3-phosphocholine + hexadecanoyl-CoA = 1-O-hexadecyl-2-hexadecanoyl-sn-glycero-3-phosphocholine + CoA. The catalysed reaction is a 1-O-(1Z-alkenyl)-sn-glycero-3-phosphocholine + hexadecanoyl-CoA = 1-O-(1Z)-alkenyl-2-hexadecanoyl-sn-glycero-3-phosphocholine + CoA. It carries out the reaction 1-hexadecanoyl-sn-glycero-3-phospho-(1'-sn-glycerol) + hexadecanoyl-CoA = 1,2-dihexadecanoyl-sn-glycero-3-phospho-(1'-sn-glycerol) + CoA. It catalyses the reaction 1-dodecanoyl-sn-glycero-3-phosphocholine + hexadecanoyl-CoA = 1-dodecanoyl-2-hexadecanoyl-sn-glycero-3-phosphocholine + CoA. The enzyme catalyses 1-tetradecanoyl-sn-glycero-3-phosphocholine + hexadecanoyl-CoA = 1-tetradecanoyl-2-hexadecanoyl-sn-glycero-3-phosphocholine + CoA. The catalysed reaction is 1-O-octadecyl-sn-glycero-3-phosphocholine + hexadecanoyl-CoA = 1-O-octadecyl-2-hexadecanoyl-sn-glycero-3-phosphocholine + CoA. It carries out the reaction 1-octadecanoyl-sn-glycero-3-phosphocholine + hexadecanoyl-CoA = 1-octadecanoyl-2-hexadecanoyl-sn-glycero-3-phosphocholine + CoA. It catalyses the reaction 1-(9Z-octadecenoyl)-sn-glycero-3-phosphocholine + hexadecanoyl-CoA = 1-(9Z-octadecenoyl)-2-hexadecanoyl-sn-glycero-3-phosphocholine + CoA. The enzyme catalyses 1-eicosanoyl-sn-glycero-3-phosphocholine + hexadecanoyl-CoA = 1-eicosanoyl-2-hexadecanoyl-sn-glycero-3-phosphocholine + CoA. The catalysed reaction is hexanoyl-CoA + 1-hexadecanoyl-sn-glycero-3-phosphocholine = 1-hexadecanoyl-2-hexanoyl-sn-glycero-3-phosphocholine + CoA. It carries out the reaction octanoyl-CoA + 1-hexadecanoyl-sn-glycero-3-phosphocholine = 1-hexadecanoyl-2-octanoyl-sn-glycero-3-phosphocholine + CoA. It catalyses the reaction decanoyl-CoA + 1-hexadecanoyl-sn-glycero-3-phosphocholine = 1-hexadecanoyl-2-decanoyl-sn-glycero-3-phosphocholine + CoA. The enzyme catalyses dodecanoyl-CoA + 1-hexadecanoyl-sn-glycero-3-phosphocholine = 1-hexadecanoyl-2-dodecanoyl-sn-glycero-3-phosphocholine + CoA. The catalysed reaction is tetradecanoyl-CoA + 1-hexadecanoyl-sn-glycero-3-phosphocholine = 1-hexadecanoyl-2-tetradecanoyl-sn-glycero-3-phosphocholine + CoA. It carries out the reaction 1-hexadecanoyl-sn-glycero-3-phosphocholine + (9Z)-octadecenoyl-CoA = 1-hexadecanoyl-2-(9Z-octadecenoyl)-sn-glycero-3-phosphocholine + CoA. It catalyses the reaction (9Z,12Z)-octadecadienoyl-CoA + 1-hexadecanoyl-sn-glycero-3-phosphocholine = 1-hexadecanoyl-2-(9Z,12Z-octadecadienoyl)-sn-glycero-3-phosphocholine + CoA. The enzyme catalyses (4Z,7Z,10Z,13Z,16Z,19Z)-docosahexaenoyl-CoA + 1-hexadecanoyl-sn-glycero-3-phosphocholine = 1-hexadecanoyl-2-(4Z,7Z,10Z,13Z,16Z,19Z-docosahexaenoyl)-sn-glycero-3-phosphocholine + CoA. The catalysed reaction is 1-hexadecanoyl-sn-glycero-3-phosphocholine + acetyl-CoA = 1-hexadecanoyl-2-acetyl-sn-glycero-3-phosphocholine + CoA. It carries out the reaction eicosanoyl-CoA + 1-hexadecanoyl-sn-glycero-3-phosphocholine = 1-hexadecanoyl-2-eicosanoyl-sn-glycero-3-phosphocholine + CoA. It catalyses the reaction 1-O-hexadecyl-sn-glycero-3-phosphocholine + acetyl-CoA = 1-O-hexadecyl-2-acetyl-sn-glycero-3-phosphocholine + CoA. The enzyme catalyses a 1-acyl-sn-glycero-3-phosphocholine + hexadecanoyl-CoA = 1-acyl-2-hexadecanoyl-sn-glycero-3-phosphocholine + CoA. The catalysed reaction is a 1-acyl-sn-glycero-3-phosphate + hexadecanoyl-CoA = 1-acyl-2-hexadecanoyl-sn-glycero-3-phosphate + CoA. It carries out the reaction 1-acyl-sn-glycero-3-phospho-(1'-sn-glycerol) + hexadecanoyl-CoA = 1-acyl-2-hexadecanoyl-sn-glycero-3-phospho-(1'-sn-glycerol) + CoA. Its pathway is lipid metabolism; phospholipid metabolism. Its activity is regulated as follows. Not activated by inflammatory stimulation. Inhibited by Cu(2+), Fe(2+), Ca(2+) and Mg(2+). Activity is not affected by Co(2+) or Mn(2+). Exhibits both acyltransferase and acetyltransferase activities. Activity is calcium-independent. Catalyzes the conversion of lysophosphatidylcholine (1-acyl-sn-glycero-3-phosphocholine or LPC) into phosphatidylcholine (1,2-diacyl-sn-glycero-3-phosphocholine or PC). Catalyzes the conversion 1-acyl-sn-glycerol-3-phosphate (lysophosphatidic acid or LPA) into 1,2-diacyl-sn-glycerol-3-phosphate (phosphatidic acid or PA) by incorporating an acyl moiety at the sn-2 position of the glycerol backbone. Displays a clear preference for saturated fatty acyl-CoAs, and 1-myristoyl or 1-palmitoyl LPC as acyl donors and acceptors, respectively. Involved in platelet-activating factor (PAF) biosynthesis by catalyzing the conversion of the PAF precursor, 1-O-alkyl-sn-glycero-3-phosphocholine (lyso-PAF) into 1-O-alkyl-2-acetyl-sn-glycero-3-phosphocholine (PAF). May synthesize phosphatidylcholine in pulmonary surfactant, thereby playing a pivotal role in respiratory physiology. Involved in the regulation of lipid droplet number and size. This is Lysophosphatidylcholine acyltransferase 1 (Lpcat1) from Mus musculus (Mouse).